We begin with the raw amino-acid sequence, 359 residues long: Pyruvate dehydrogenase E1 component subunit beta, mitochondrial (359 aa).

The N-terminal 30 residues, 1–30, are a transit peptide targeting the mitochondrion; the sequence is MAVVAGLVRGPLRQASGLLKRRFHRSAPAA. At Tyr67 the chain carries Phosphotyrosine. Glu89 contacts thiamine diphosphate. Positions 142, 190, 191, 193, and 195 each coordinate K(+). Lys354 is subject to N6-acetyllysine.

As to quaternary structure, heterotetramer of two PDHA1 and two PDHB subunits. The heterotetramer interacts with DLAT, and is part of the multimeric pyruvate dehydrogenase complex that contains multiple copies of pyruvate dehydrogenase (E1), dihydrolipoamide acetyltransferase (DLAT, E2) and lipoamide dehydrogenase (DLD, E3). These subunits are bound to an inner core composed of about 48 DLAT and 12 PDHX molecules. Interacts with DLAT. The cofactor is thiamine diphosphate.

Its subcellular location is the mitochondrion matrix. The enzyme catalyses N(6)-[(R)-lipoyl]-L-lysyl-[protein] + pyruvate + H(+) = N(6)-[(R)-S(8)-acetyldihydrolipoyl]-L-lysyl-[protein] + CO2. The pyruvate dehydrogenase complex catalyzes the overall conversion of pyruvate to acetyl-CoA and CO(2), and thereby links the glycolytic pathway to the tricarboxylic cycle. This is Pyruvate dehydrogenase E1 component subunit beta, mitochondrial (Pdhb) from Mus musculus (Mouse).